The primary structure comprises 359 residues: Hereditary hemochromatosis protein homolog (359 aa).

Positions 1-24 are cleaved as a signal peptide; the sequence is MSLSAGLPVRPLLLLLLLLWSVAP. Residues 25–126 form an alpha-1 region; that stretch reads QALPPRSHSL…KVTKLGVVSE (102 aa). The Extracellular portion of the chain corresponds to 25–318; it reads QALPPRSHSL…WEPLQSQAMI (294 aa). N-linked (GlcNAc...) asparagine glycans are attached at residues Asn-114, Asn-142, Asn-166, and Asn-246. Residues 127–217 form an alpha-2 region; that stretch reads SHILQVVLGC…ELGRGVLGQQ (91 aa). Disulfide bonds link Cys-136–Cys-199 and Cys-237–Cys-294. The segment at 218-309 is alpha-3; it reads VPTLVKVTRH…GLDQPLTASW (92 aa). Residues 219-308 enclose the Ig-like C1-type domain; the sequence is PTLVKVTRHW…PGLDQPLTAS (90 aa). Residues 310–318 are connecting peptide; that stretch reads EPLQSQAMI. The helical transmembrane segment at 319–339 threads the bilayer; the sequence is IGIISGVTVCAIFLVGILFLI. At 340–359 the chain is on the cytoplasmic side; sequence LRKRKASGGTMGGYVLTDCE.

It belongs to the MHC class I family. In terms of assembly, binds TFR through the extracellular domain in a pH-dependent manner.

The protein resides in the cell membrane. Functionally, binds to transferrin receptor (TFR) and reduces its affinity for iron-loaded transferrin. This chain is Hereditary hemochromatosis protein homolog (Hfe), found in Mus musculus (Mouse).